Reading from the N-terminus, the 218-residue chain is MGQKVHPLGFRLRITQTHRSSWFASSKNYPETLAEDYAIRNYVKVNLSSAGISKVEIHRKSDQVELEIHTSRPGIIVGRSGSGIDTIKEDLRKIINKNNQIRINVTELKNVDADANLIAEFIAQQLEKRIAFRRATRQAIQRAQRANVQGIKVQVSGRLNGAEIARSEWVREGRVPLQTLRADIDYATKEADTTYGKLGVKVWVFNGEKTPSIAKVEV.

The KH type-2 domain maps to 39-109 (IRNYVKVNLS…QIRINVTELK (71 aa)).

The protein belongs to the universal ribosomal protein uS3 family. In terms of assembly, part of the 30S ribosomal subunit.

Its subcellular location is the plastid. It is found in the chloroplast. The chain is Small ribosomal subunit protein uS3c (rps3) from Rhodomonas salina (Cryptomonas salina).